Reading from the N-terminus, the 133-residue chain is 14 kDa fatty acid-binding protein (133 aa).

(5Z,8Z,11Z,14Z)-eicosatetraenoate-binding positions include R107 and 127–129; that span reads RNY. Residues R107 and 127–129 each bind (9Z)-octadecenoate; that span reads RNY.

The protein belongs to the calycin superfamily. Fatty-acid binding protein (FABP) family. As to expression, tubercles, muscle layers and body.

The protein localises to the cytoplasm. Its function is as follows. May play a role in the transport of fatty acids. Binds various fatty acids, such as arachidonic, oleic, palmitic and linolenic acid (in vitro). This is 14 kDa fatty acid-binding protein from Schistosoma mansoni (Blood fluke).